Here is a 227-residue protein sequence, read N- to C-terminus: MKSKLAITMVSALLLAACAVQEPPLVQGPTTAKPQPRPVGLPANGAIFQAASYRPMFQDAMPIQVGDTLQITIQENSSTSQSEQVTDTRTSGLSSNITAGVKIPFLPSGLASGLGGTSFNSSGSANNTGKGNNQVATTFVSSITVTVTDVLANGNLVVSGEKMVRINSDTESIRLSGVVNPRDVTPDRTVSSLKVADARIEQQTKGNNRLYNEPGWLSKIFMSLLPI.

The signal sequence occupies residues 1–17 (MKSKLAITMVSALLLAA). Cysteine 18 carries N-palmitoyl cysteine lipidation. The S-diacylglycerol cysteine moiety is linked to residue cysteine 18.

Belongs to the FlgH family. The basal body constitutes a major portion of the flagellar organelle and consists of four rings (L,P,S, and M) mounted on a central rod.

The protein resides in the cell outer membrane. It is found in the bacterial flagellum basal body. In terms of biological role, assembles around the rod to form the L-ring and probably protects the motor/basal body from shearing forces during rotation. This chain is Flagellar L-ring protein 2, found in Chromobacterium violaceum (strain ATCC 12472 / DSM 30191 / JCM 1249 / CCUG 213 / NBRC 12614 / NCIMB 9131 / NCTC 9757 / MK).